A 106-amino-acid polypeptide reads, in one-letter code: ATP-dependent Clp protease adapter protein ClpS (106 aa).

Basic and acidic residues predominate over residues 1–14; the sequence is MTDKAGDWQEHGPQ. The tract at residues 1-21 is disordered; the sequence is MTDKAGDWQEHGPQVEEAPPQ.

Belongs to the ClpS family. As to quaternary structure, binds to the N-terminal domain of the chaperone ClpA.

In terms of biological role, involved in the modulation of the specificity of the ClpAP-mediated ATP-dependent protein degradation. This Alkalilimnicola ehrlichii (strain ATCC BAA-1101 / DSM 17681 / MLHE-1) protein is ATP-dependent Clp protease adapter protein ClpS.